A 265-amino-acid polypeptide reads, in one-letter code: 4-hydroxy-2-oxo-heptane-1,7-dioate aldolase (265 aa).

Residue histidine 45 is the Proton acceptor of the active site. Glutamine 147 is a substrate binding site. Residue glutamate 149 participates in a divalent metal cation binding. The substrate site is built by alanine 174 and aspartate 175. Residue aspartate 175 participates in a divalent metal cation binding.

It belongs to the HpcH/HpaI aldolase family. As to quaternary structure, homohexamer; trimer of dimers. The cofactor is a divalent metal cation.

The enzyme catalyses 4-hydroxy-2-oxoheptanedioate = succinate semialdehyde + pyruvate. It functions in the pathway aromatic compound metabolism; 4-hydroxyphenylacetate degradation; pyruvate and succinate semialdehyde from 4-hydroxyphenylacetate: step 7/7. Its function is as follows. Catalyzes the reversible retro-aldol cleavage of 4-hydroxy-2-ketoheptane-1,7-dioate (HKHD) to pyruvate and succinic semialdehyde. In Klebsiella pneumoniae subsp. pneumoniae (strain ATCC 700721 / MGH 78578), this protein is 4-hydroxy-2-oxo-heptane-1,7-dioate aldolase.